A 438-amino-acid polypeptide reads, in one-letter code: Enolase (438 aa).

Gln-174 contacts (2R)-2-phosphoglycerate. Glu-216 functions as the Proton donor in the catalytic mechanism. Mg(2+)-binding residues include Asp-253, Glu-297, and Asp-324. Positions 349, 378, 379, and 400 each coordinate (2R)-2-phosphoglycerate. Lys-349 acts as the Proton acceptor in catalysis.

Belongs to the enolase family. As to quaternary structure, component of the RNA degradosome, a multiprotein complex involved in RNA processing and mRNA degradation. Mg(2+) serves as cofactor.

It is found in the cytoplasm. It localises to the secreted. The protein resides in the cell surface. The catalysed reaction is (2R)-2-phosphoglycerate = phosphoenolpyruvate + H2O. The protein operates within carbohydrate degradation; glycolysis; pyruvate from D-glyceraldehyde 3-phosphate: step 4/5. In terms of biological role, catalyzes the reversible conversion of 2-phosphoglycerate (2-PG) into phosphoenolpyruvate (PEP). It is essential for the degradation of carbohydrates via glycolysis. This Psychrobacter sp. (strain PRwf-1) protein is Enolase.